We begin with the raw amino-acid sequence, 664 residues long: Chaperone protein dnaK1 (664 aa).

The residue at position 198 (T198) is a Phosphothreonine; by autocatalysis.

It belongs to the heat shock protein 70 family.

Functionally, acts as a chaperone. The protein is Chaperone protein dnaK1 (dnaK1) of Prochlorococcus marinus (strain MIT 9313).